A 213-amino-acid polypeptide reads, in one-letter code: Large ribosomal subunit protein uL3 (213 aa).

The interval Gly131–Arg155 is disordered. The segment covering His135–Asp152 has biased composition (polar residues). An N5-methylglutamine modification is found at Gln151.

Belongs to the universal ribosomal protein uL3 family. In terms of assembly, part of the 50S ribosomal subunit. Forms a cluster with proteins L14 and L19. In terms of processing, methylated by PrmB.

In terms of biological role, one of the primary rRNA binding proteins, it binds directly near the 3'-end of the 23S rRNA, where it nucleates assembly of the 50S subunit. This Agrobacterium fabrum (strain C58 / ATCC 33970) (Agrobacterium tumefaciens (strain C58)) protein is Large ribosomal subunit protein uL3.